A 476-amino-acid chain; its full sequence is Bifunctional protein HldE (476 aa).

Positions methionine 1–serine 318 are ribokinase. Asparagine 195–glutamate 198 contributes to the ATP binding site. Residue aspartate 264 is part of the active site. The interval methionine 344–glycine 476 is cytidylyltransferase.

This sequence in the N-terminal section; belongs to the carbohydrate kinase PfkB family. It in the C-terminal section; belongs to the cytidylyltransferase family. Homodimer.

It catalyses the reaction D-glycero-beta-D-manno-heptose 7-phosphate + ATP = D-glycero-beta-D-manno-heptose 1,7-bisphosphate + ADP + H(+). The catalysed reaction is D-glycero-beta-D-manno-heptose 1-phosphate + ATP + H(+) = ADP-D-glycero-beta-D-manno-heptose + diphosphate. The protein operates within nucleotide-sugar biosynthesis; ADP-L-glycero-beta-D-manno-heptose biosynthesis; ADP-L-glycero-beta-D-manno-heptose from D-glycero-beta-D-manno-heptose 7-phosphate: step 1/4. It functions in the pathway nucleotide-sugar biosynthesis; ADP-L-glycero-beta-D-manno-heptose biosynthesis; ADP-L-glycero-beta-D-manno-heptose from D-glycero-beta-D-manno-heptose 7-phosphate: step 3/4. In terms of biological role, catalyzes the phosphorylation of D-glycero-D-manno-heptose 7-phosphate at the C-1 position to selectively form D-glycero-beta-D-manno-heptose-1,7-bisphosphate. Its function is as follows. Catalyzes the ADP transfer from ATP to D-glycero-beta-D-manno-heptose 1-phosphate, yielding ADP-D-glycero-beta-D-manno-heptose. In Aliivibrio fischeri (strain MJ11) (Vibrio fischeri), this protein is Bifunctional protein HldE.